Reading from the N-terminus, the 284-residue chain is MEDEKFPISYVHGKFLVFDVQAVEVFRKNYHILGTLVGTLPQLPQQNVFLGLPMELSKEEAFYLIEKGISYIVDDTKVHKQLLENTTKDDVKQCLKKRQSLAYDQMIAAKKKENEKKIEIMKKLGRTLPLDPLNYDEHDSFDLSWIPVDTVTTRIAEKSSMNDDFHKEEDVFENLDINRYLMFKSLVDTGFYLNPGLRFGCQFVAYPGDALRYHSHYLVNSYKWDQEIPVLFLIGGGRLGTAVKKTWLIGGSNDRNINMNGEKSKEELLLLPVRHFSIEWAGFG.

Active-site residues include Tyr206, His214, and Lys245.

The protein belongs to the tRNA-intron endonuclease family. In terms of assembly, heterotetramer composed of sen2, sen15, sen34 and sen54. Interacts directly with sen15.

The enzyme catalyses pretRNA = a 3'-half-tRNA molecule with a 5'-OH end + a 5'-half-tRNA molecule with a 2',3'-cyclic phosphate end + an intron with a 2',3'-cyclic phosphate and a 5'-hydroxyl terminus.. Constitutes one of the two catalytic subunit of the tRNA-splicing endonuclease complex, a complex responsible for identification and cleavage of the splice sites in pre-tRNA. It cleaves pre-tRNA at the 5'- and 3'-splice sites to release the intron. The products are an intron and two tRNA half-molecules bearing 2',3'-cyclic phosphate and 5'-OH termini. There are no conserved sequences at the splice sites, but the intron is invariably located at the same site in the gene, placing the splice sites an invariant distance from the constant structural features of the tRNA body. It probably carries the active site for 3'-splice site cleavage. The polypeptide is Probable tRNA-splicing endonuclease subunit sen34 (sen34) (Schizosaccharomyces pombe (strain 972 / ATCC 24843) (Fission yeast)).